A 315-amino-acid chain; its full sequence is Iron(3+)-hydroxamate-binding protein FhuD (315 aa).

An N-terminal signal peptide occupies residues 1–23 (MTHIYKKLGAAFFALLLIAALAA). Cys24 carries N-palmitoyl cysteine lipidation. Cys24 is lipidated: S-diacylglycerol cysteine. The Fe/B12 periplasmic-binding domain occupies 60–315 (RVVVMADGYY…LEFITESLTK (256 aa)).

This sequence belongs to the bacterial solute-binding protein 8 family. In terms of assembly, the complex is composed of an ATP-binding protein (FhuC), two transmembrane proteins (FhuB and FhuG) and a solute-binding protein (FhuD or YxeB).

It localises to the cell membrane. It is found in the membrane raft. Its function is as follows. Part of the ABC transporter complex FhuCBGD involved in iron(3+)-hydroxamate import. Binds the iron(3+)-hydroxamate complex and transfers it to the membrane-bound permease. Required for the transport of ferrichrome and coprogen. The sequence is that of Iron(3+)-hydroxamate-binding protein FhuD (fhuD) from Bacillus subtilis (strain 168).